The primary structure comprises 327 residues: Lipoyl synthase (327 aa).

[4Fe-4S] cluster-binding residues include cysteine 72, cysteine 77, cysteine 83, cysteine 98, cysteine 102, cysteine 105, and serine 313. The region spanning 83–302 (CWSHGTATIM…RKVGLEKGFL (220 aa)) is the Radical SAM core domain.

This sequence belongs to the radical SAM superfamily. Lipoyl synthase family. [4Fe-4S] cluster serves as cofactor.

The protein resides in the cytoplasm. It catalyses the reaction [[Fe-S] cluster scaffold protein carrying a second [4Fe-4S](2+) cluster] + N(6)-octanoyl-L-lysyl-[protein] + 2 oxidized [2Fe-2S]-[ferredoxin] + 2 S-adenosyl-L-methionine + 4 H(+) = [[Fe-S] cluster scaffold protein] + N(6)-[(R)-dihydrolipoyl]-L-lysyl-[protein] + 4 Fe(3+) + 2 hydrogen sulfide + 2 5'-deoxyadenosine + 2 L-methionine + 2 reduced [2Fe-2S]-[ferredoxin]. Its pathway is protein modification; protein lipoylation via endogenous pathway; protein N(6)-(lipoyl)lysine from octanoyl-[acyl-carrier-protein]: step 2/2. Functionally, catalyzes the radical-mediated insertion of two sulfur atoms into the C-6 and C-8 positions of the octanoyl moiety bound to the lipoyl domains of lipoate-dependent enzymes, thereby converting the octanoylated domains into lipoylated derivatives. This is Lipoyl synthase from Francisella tularensis subsp. mediasiatica (strain FSC147).